A 243-amino-acid chain; its full sequence is Juxtaposed with another zinc finger protein 1 (243 aa).

The segment at 12 to 37 adopts a C2H2-type 1 zinc-finger fold; it reads NTCRFGGCGLHFPTLADLIEHIEDNH. Residues 39–79 form a required for interaction with NR2C2 region; it reads DTDPRVLEKQELQQPTYVALSYINRFMTDAARREQESLKKK. Residues 89–108 are compositionally biased toward polar residues; sequence SSSVSRGNVSTPPRHSSGSL. The segment at 89–151 is disordered; the sequence is SSSVSRGNVS…SDSDESWTTE (63 aa). Phosphothreonine occurs at positions 109 and 113. Residues 118-130 are compositionally biased toward low complexity; the sequence is PSSSFRSSTPTGS. Residues 131–148 are compositionally biased toward acidic residues; the sequence is EYDEEEVDYEESDSDESW. Residues 173–198 form a C2H2-type 2 zinc finger; the sequence is FACPVPGCKKRYKNVNGIKYHAKNGH. Residues 208 to 230 form a C2H2-type 3; degenerate zinc finger; that stretch reads FKCRCGKSYKTAQGLRHHTINFH.

Interacts with NR2C2 (via ligand-binding region). Expressed in range of tissues with highest expression levels in testis, liver, muscle and fat and lowest levels in kidney. Detected in liver and white adipose tissue (at protein level).

It is found in the nucleus. Functionally, acts as a transcriptional corepressor of orphan nuclear receptor NR2C2. Inhibits expression of the gluconeogenesis enzyme PCK2 through inhibition of NR2C2 activity. Also involved in transcriptional activation of NAMPT by promoting expression of PPARA and PPARD. Plays a role in lipid metabolism by suppressing lipogenesis, increasing lipolysis and decreasing lipid accumulation in adipose tissue. Plays a role in glucose homeostasis by improving glucose metabolism and insulin sensitivity. The protein is Juxtaposed with another zinc finger protein 1 (Jazf1) of Mus musculus (Mouse).